Reading from the N-terminus, the 81-residue chain is Cytochrome b559 subunit alpha (81 aa).

Residues 21 to 35 (VIHSVTIPSLFVGGW) form a helical membrane-spanning segment. Position 23 (His23) interacts with heme.

Belongs to the PsbE/PsbF family. Heterodimer of an alpha subunit and a beta subunit. PSII is composed of 1 copy each of membrane proteins PsbA, PsbB, PsbC, PsbD, PsbE, PsbF, PsbH, PsbI, PsbJ, PsbK, PsbL, PsbM, PsbT, PsbY, PsbZ, Psb30/Ycf12, at least 3 peripheral proteins of the oxygen-evolving complex and a large number of cofactors. It forms dimeric complexes. Requires heme b as cofactor.

The protein localises to the plastid. It is found in the chloroplast thylakoid membrane. Functionally, this b-type cytochrome is tightly associated with the reaction center of photosystem II (PSII). PSII is a light-driven water:plastoquinone oxidoreductase that uses light energy to abstract electrons from H(2)O, generating O(2) and a proton gradient subsequently used for ATP formation. It consists of a core antenna complex that captures photons, and an electron transfer chain that converts photonic excitation into a charge separation. The protein is Cytochrome b559 subunit alpha of Euglena gracilis.